Here is a 2137-residue protein sequence, read N- to C-terminus: Pecanex-like protein 2 (2137 aa).

A run of 2 helical transmembrane segments spans residues 34-54 (CHLY…LAFP) and 57-77 (AIIV…IKLV). 4 disordered regions span residues 92–163 (QQKP…LELS), 225–251 (NGKG…VDKG), 402–530 (EKTS…HARV), and 545–572 (SAEI…QMPN). The segment covering 96 to 114 (SRKEEKPNKDKEAKGEHIT) has biased composition (basic and acidic residues). Over residues 116 to 125 (HRNPSNNRQI) the composition is skewed to polar residues. An N-linked (GlcNAc...) asparagine glycan is attached at Asn136. Over residues 146–156 (SRGQSITSHHS) the composition is skewed to polar residues. Asn449 carries an N-linked (GlcNAc...) asparagine glycan. Residues 479–490 (IKDHSSSSREPW) show a composition bias toward basic and acidic residues. Polar residues predominate over residues 510–520 (GQTNLDPSSCK). Residues Asn550, Asn572, Asn587, Asn598, and Asn613 are each glycosylated (N-linked (GlcNAc...) asparagine). A compositionally biased stretch (polar residues) spans 593 to 602 (ASSQLNGSAE). The interval 593–612 (ASSQLNGSAEQNEESGLLRD) is disordered. Disordered stretches follow at residues 621–655 (EILE…CTQP) and 740–763 (AREM…SGDP). Positions 630-655 (GHSSKQGKPDLQSQDHTSTGPACTQP) are enriched in polar residues. Over residues 746 to 760 (SSSSTTTSESQDPSS) the composition is skewed to low complexity. A run of 13 helical transmembrane segments spans residues 844-864 (LAIL…SQGF), 868-888 (MWVL…LKSV), 901-921 (QIIT…ILLL), 952-972 (YLIV…FPQI), 983-1003 (IDML…VYSV), 1029-1049 (HIPA…YHLS), 1099-1119 (LIVC…TVFL), 1124-1144 (FLSI…HYVL), 1193-1213 (YILY…LISN), 1237-1257 (SFCN…FFHF), 1265-1285 (SFLL…DLLH), 1302-1322 (GSSF…MLFF), and 1324-1344 (TIAT…VIFI). N-linked (GlcNAc...) asparagine glycosylation is found at Asn1412, Asn1553, and Asn1818. The disordered stretch occupies residues 1876-1958 (RQHSGGNIED…RPPMLSSSGP (83 aa)). 3 stretches are compositionally biased toward polar residues: residues 1901-1910 (SGGSQESSAE), 1920-1929 (GVSSCEGTQR), and 1937-1958 (SQSV…SSGP). A glycan (N-linked (GlcNAc...) asparagine) is linked at Asn2054.

It belongs to the pecanex family.

It is found in the membrane. May play a role in tumorigenesis of colorectal carcinomas with high microsatellite instability (MSI-H). This chain is Pecanex-like protein 2, found in Homo sapiens (Human).